The primary structure comprises 750 residues: Rho GTPase-activating protein 9 (750 aa).

An SH3 domain is found at 22 to 88 (PRGSQLCALY…PAAYMIEESI (67 aa)). Disordered regions lie at residues 120-187 (ALPS…LMSE) and 242-319 (WKPP…LLDD). The segment covering 163–180 (RSLSQEDLPSEASASTAG) has biased composition (polar residues). In terms of domain architecture, WW spans 213-247 (LQRLDAWEQHLDPNSGRCFYINSLTGCKSWKPPRR). Polar residues-rich tracts occupy residues 251–270 (ETNPGSMEGTQTLKRNNDVL) and 291–300 (GSLSLSQRTS). A compositionally biased stretch (low complexity) spans 301–317 (QLDPPALQAPRPLPQLL). The PH domain occupies 322–435 (EVEKSGLLNM…WHRALRTVIE (114 aa)). Lipid binding regions lie at residues 342-345 (RKNW), 397-399 (SSR), and 432-669 (TVIE…CLSQ). The segment covering 446–462 (EAPTGRDQGSGDRENPL) has biased composition (basic and acidic residues). Positions 446-488 (EAPTGRDQGSGDRENPLELRLSGSGPAELSAGEDEEEESELVS) are disordered. S475 bears the Phosphoserine mark. Over residues 476 to 485 (AGEDEEEESE) the composition is skewed to acidic residues. The residue at position 500 (S500) is a Phosphoserine. The region spanning 542-749 (CQLESLCQRE…LMLTNFTSLF (208 aa)) is the Rho-GAP domain.

Interacts with FASLG. In terms of tissue distribution, predominantly expressed in peripheral blood leukocytes, spleen, and thymus.

Functionally, GTPase activator for the Rho-type GTPases by converting them to an inactive GDP-bound state. Has a substantial GAP activity toward CDC42 and RAC1 and less toward RHOA. Has a role in regulating adhesion of hematopoietic cells to the extracellular matrix. Binds phosphoinositides, and has the highest affinity for phosphatidylinositol 3,4,5-trisphosphate, followed by phosphatidylinositol 3,4-bisphosphate and phosphatidylinositol 4,5-bisphosphate. In Homo sapiens (Human), this protein is Rho GTPase-activating protein 9 (ARHGAP9).